We begin with the raw amino-acid sequence, 319 residues long: L-threo-3-hydroxyaspartate ammonia-lyase (319 aa).

Lysine 53 carries the post-translational modification N6-(pyridoxal phosphate)lysine. Pyridoxal 5'-phosphate is bound by residues asparagine 80, 179-183 (GGGGM), and threonine 304.

The protein belongs to the serine/threonine dehydratase family. As to quaternary structure, may be either a monomer or a homodimer. It depends on pyridoxal 5'-phosphate as a cofactor. Mn(2+) serves as cofactor. Requires Mg(2+) as cofactor. Ca(2+) is required as a cofactor.

The enzyme catalyses (3S)-3-hydroxy-L-aspartate = oxaloacetate + NH4(+). Its activity is regulated as follows. Is strongly inhibited by hydroxylamine and EDTA in vitro. In terms of biological role, catalyzes the deamination of L-threo-3-hydroxyaspartate to oxaloacetate and ammonia. Shows a high specificity towards L-threo-3-hydroxyaspartate as other 3-hydroxyaminoacids, i.e. D,L-erythro- and D-threo-3-hydroxyaspartate, D-threonine, L-threonine, D,L-allothreonine, D,L-threo-3-phenylserine, D-serine, and L-serine, are not substrates for this enzyme. Exhibits no detectable serine and aspartate racemase activity. Might play a role in the detoxification of naturally occurring 3-hydroxyaspartate in Pseudomonas sp. T62 cells. This Pseudomonas sp protein is L-threo-3-hydroxyaspartate ammonia-lyase.